The sequence spans 257 residues: Protein patched homolog 1 (257 aa).

At 1–199 (AKLQTGTAYL…LDDILKSFSD (199 aa)) the chain is on the extracellular side. 3 N-linked (GlcNAc...) asparagine glycosylation sites follow: Asn75, Asn114, and Asn177. A helical membrane pass occupies residues 200-220 (ISVIRVASGYLLMLAYACLTM). The SSD domain maps to 201–257 (SVIRVASGYLLMLAYACLTMLRWDCAKSQGAVGLAGVLLVALSVAAGLGLCSLIGIS). At 221–235 (LRWDCAKSQGAVGLA) the chain is on the cytoplasmic side. A helical membrane pass occupies residues 236-256 (GVLLVALSVAAGLGLCSLIGI).

Belongs to the patched family. In terms of processing, glycosylation is necessary for SHH binding. In the eye, detected in neural retina, iris, retinal pigment epithelium, but not in lens.

It localises to the membrane. Acts as a receptor for sonic hedgehog (SHH), indian hedgehog (IHH) and desert hedgehog (DHH). Associates with the smoothened protein (SMO) to transduce the hedgehog's proteins signal. This Cynops pyrrhogaster (Japanese fire-bellied newt) protein is Protein patched homolog 1 (PTC1).